The chain runs to 262 residues: Sugar fermentation stimulation protein homolog (262 aa).

It belongs to the SfsA family.

This is Sugar fermentation stimulation protein homolog from Lawsonia intracellularis (strain PHE/MN1-00).